The sequence spans 987 residues: Probable outer membrane protein PmpG (987 aa).

A signal peptide spans 1-25; it reads MMQTPFHKFFLLAMLSYSLLQGGHA. The Autotransporter domain occupies 707–987; it reads GRAYCRGIWI…GLSIGSKIRF (281 aa).

This sequence belongs to the PMP outer membrane protein family.

The protein localises to the secreted. It is found in the cell wall. Its subcellular location is the cell outer membrane. This is Probable outer membrane protein PmpG (pmpG) from Chlamydia muridarum (strain MoPn / Nigg).